We begin with the raw amino-acid sequence, 153 residues long: MIVERVLYNIKDIDLEKLEVDFVDIEWYEVQKKILRKLSSNGIEVGIRNSNGEALKEGDVLWQEGNKVLVVRIPYCDCIVLKPQNMYEMGKTCYEMGNRHAPLFIDGDELMTPYDEPLMQALIKCGLSPYKKSCKLTTPLGGNLHGYSHSHSH.

It belongs to the UreE family.

It localises to the cytoplasm. Involved in urease metallocenter assembly. Binds nickel. Probably functions as a nickel donor during metallocenter assembly. The chain is Urease accessory protein UreE from Acetivibrio thermocellus (strain ATCC 27405 / DSM 1237 / JCM 9322 / NBRC 103400 / NCIMB 10682 / NRRL B-4536 / VPI 7372) (Clostridium thermocellum).